The following is a 219-amino-acid chain: Sporamin A (219 aa).

An N-terminal signal peptide occupies residues 1–23 (MKALTLALFLALSLYLLPNPAHS).

It belongs to the protease inhibitor I3 (leguminous Kunitz-type inhibitor) family. Accumulates specifically in tuberous roots and tubers upon tuberization. Sporamin accounts 60 to 80% of the total soluble protein of the organ.

It localises to the vacuole. Major tuberous root protein. The sequence is that of Sporamin A (GSPO-A1) from Ipomoea batatas (Sweet potato).